Consider the following 846-residue polypeptide: Enhancer of polycomb-like protein 1 (846 aa).

Disordered stretches follow at residues 169-204 (FNSKAEGSSGDVKSDKEQGRGMRVKGKDREKEKGDA), 391-466 (TSDE…APDA), 587-609 (EKKRPRSIDEVEEEMQEQSPKAM), 682-702 (AADAKPPPAPIFQKPPAPQPN), and 759-804 (QVQA…GVKQ). Residues 180–203 (VKSDKEQGRGMRVKGKDREKEKGD) are compositionally biased toward basic and acidic residues. Polar residues predominate over residues 411-426 (PSLSGQTPLTSGQSSS). Residues 432-452 (TDKDREERAQRERYDAQRNAE) show a composition bias toward basic and acidic residues. Residues 434–490 (KDREERAQRERYDAQRNAERSGILSGRSNAPDALKERLQALQQKTEEMLARKKEQDA) adopt a coiled-coil conformation. A compositionally biased stretch (pro residues) spans 686–702 (KPPPAPIFQKPPAPQPN). The span at 759-773 (QVQAQGQGHPQAHLQ) shows a compositional bias: low complexity. Polar residues predominate over residues 774 to 796 (THPQGVSQPNGVNSPMPNGQQML).

Belongs to the enhancer of polycomb family. Component of the NuA4 histone acetyltransferase complex.

The protein resides in the nucleus. Its function is as follows. Component of the NuA4 histone acetyltransferase complex which is involved in transcriptional activation of selected genes principally by acetylation of nucleosomal histone H4 and H2A. The NuA4 complex is also involved in DNA repair. Involved in gene silencing by neighboring heterochromatin, blockage of the silencing spreading along the chromosome, and required for cell cycle progression through G2/M. The protein is Enhancer of polycomb-like protein 1 (EPL1) of Cryptococcus neoformans var. neoformans serotype D (strain B-3501A) (Filobasidiella neoformans).